The primary structure comprises 312 residues: Acetaldehyde dehydrogenase 2 (312 aa).

11 to 14 contacts NAD(+); it reads SGNI. The active-site Acyl-thioester intermediate is the Cys129. NAD(+) contacts are provided by residues 160–168 and Asn287; that span reads SAGPGTRAN.

This sequence belongs to the acetaldehyde dehydrogenase family.

It catalyses the reaction acetaldehyde + NAD(+) + CoA = acetyl-CoA + NADH + H(+). This Novosphingobium aromaticivorans (strain ATCC 700278 / DSM 12444 / CCUG 56034 / CIP 105152 / NBRC 16084 / F199) protein is Acetaldehyde dehydrogenase 2.